Consider the following 221-residue polypeptide: Probable endo-1,4-beta-xylanase B (221 aa).

A signal peptide spans 1–19 (MVSFSSLALALSTVVGVLA). The 189-residue stretch at 33-221 (QLTHSQTGTK…SSGSATMTVS (189 aa)) folds into the GH11 domain. Glu-117 (nucleophile) is an active-site residue. The active-site Proton donor is Glu-208.

Belongs to the glycosyl hydrolase 11 (cellulase G) family.

The protein localises to the secreted. It carries out the reaction Endohydrolysis of (1-&gt;4)-beta-D-xylosidic linkages in xylans.. The protein operates within glycan degradation; xylan degradation. Its function is as follows. Endo-1,4-beta-xylanase involved in the hydrolysis of xylan, a major structural heterogeneous polysaccharide found in plant biomass representing the second most abundant polysaccharide in the biosphere, after cellulose. The polypeptide is Probable endo-1,4-beta-xylanase B (xlnB) (Aspergillus clavatus (strain ATCC 1007 / CBS 513.65 / DSM 816 / NCTC 3887 / NRRL 1 / QM 1276 / 107)).